The sequence spans 459 residues: Putrescine aminotransferase (459 aa).

Residues 150-151 (GT) and Gln274 contribute to the pyridoxal 5'-phosphate site. Position 300 is an N6-(pyridoxal phosphate)lysine (Lys300). Thr332 is a pyridoxal 5'-phosphate binding site.

Belongs to the class-III pyridoxal-phosphate-dependent aminotransferase family. Putrescine aminotransferase subfamily. The cofactor is pyridoxal 5'-phosphate.

The enzyme catalyses an alkane-alpha,omega-diamine + 2-oxoglutarate = an omega-aminoaldehyde + L-glutamate. The catalysed reaction is putrescine + 2-oxoglutarate = 1-pyrroline + L-glutamate + H2O. It catalyses the reaction cadaverine + 2-oxoglutarate = 5-aminopentanal + L-glutamate. It functions in the pathway amine and polyamine degradation; putrescine degradation; 4-aminobutanal from putrescine (transaminase route): step 1/1. In terms of biological role, catalyzes the aminotransferase reaction from putrescine to 2-oxoglutarate, leading to glutamate and 4-aminobutanal, which spontaneously cyclizes to form 1-pyrroline. This is the first step in one of two pathways for putrescine degradation, where putrescine is converted into 4-aminobutanoate (gamma-aminobutyrate or GABA) via 4-aminobutanal. Also functions as a cadaverine transaminase in a a L-lysine degradation pathway to succinate that proceeds via cadaverine, glutarate and L-2-hydroxyglutarate. This is Putrescine aminotransferase from Escherichia coli O81 (strain ED1a).